The chain runs to 536 residues: Heparanase-like protein 3 (536 aa).

Positions 1-24 (MAYRQILAIVLFLCVFQFLDCTVS) are cleaved as a signal peptide. Asn-30, Asn-122, Asn-176, and Asn-191 each carry an N-linked (GlcNAc...) asparagine glycan. Glu-202 serves as the catalytic Proton donor. N-linked (GlcNAc...) asparagine glycosylation is found at Asn-265 and Asn-308. The active-site Nucleophile is the Glu-319. Asn-370, Asn-427, Asn-438, and Asn-510 each carry an N-linked (GlcNAc...) asparagine glycan.

This sequence belongs to the glycosyl hydrolase 79 family.

The protein resides in the lysosome membrane. The protein localises to the secreted. Endoglycosidase which is a cell surface and extracellular matrix-degrading enzyme. Cleaves heparan sulfate proteoglycans (HSPGs) into heparan sulfate side chains and core proteoglycans. In Arabidopsis thaliana (Mouse-ear cress), this protein is Heparanase-like protein 3.